Reading from the N-terminus, the 285-residue chain is MKYIGAHVSAAGGLANAAIRAAEIDATAFALFTKNQRQWRAAPLTTQTIDEFKAACEKYHYTSAQILPHDSYLINLGHPVTEALEKSRDAFIDEMQRCEQLGLSLLNFHPGSHLMQISEEDCLARIAESINIALDKTQGVTAVIENTAGQGSNLGFKFEHLAAIIDGVEDKSRVGVCIDTCHAFAAGYDLRTPAECEKTFADFARIVGFKYLRGMHLNDAKSTFGSRVDRHHSLGEGNIGHDAFRWIMQNDRFDGIPLILETINPDIWAEEIAWLKAQQTEKAVA.

Zn(2+) is bound by residues His69, His109, Glu145, Asp179, His182, His216, Asp229, His231, and Glu261.

This sequence belongs to the AP endonuclease 2 family. Requires Zn(2+) as cofactor.

The enzyme catalyses Endonucleolytic cleavage to 5'-phosphooligonucleotide end-products.. In terms of biological role, endonuclease IV plays a role in DNA repair. It cleaves phosphodiester bonds at apurinic or apyrimidinic (AP) sites, generating a 3'-hydroxyl group and a 5'-terminal sugar phosphate. The polypeptide is Probable endonuclease 4 (Shigella flexneri serotype 5b (strain 8401)).